Consider the following 529-residue polypeptide: DEP domain-containing protein 1B (529 aa).

The DEP domain occupies 24 to 108 (FRAGMPLRKH…DDGHLYRFPP (85 aa)). Residues 192–393 (ARLQKVLGLD…FLMDNYQEIL (202 aa)) form the Rho-GAP domain.

This Gallus gallus (Chicken) protein is DEP domain-containing protein 1B (DEPDC1B).